The primary structure comprises 23 residues: Unknown protein 1 (23 aa).

The sequence is that of Unknown protein 1 from Coniferiporia sulphurascens (Laminated root rot fungus).